The chain runs to 470 residues: MSDTVISLISHSITTVFYLVPLIIALIIPFSLYSGFRRKSKTVAFFHPYCNAGGGGERVLWAAIRTMQKKFPDHKYFVYSGDTDATKEQILLKARQRFGIELDPSNIQFIYLHWRTLVEARHYKHCTMLFQALAGLILALEAWFRMVPAVFIDSMGYPLSLPAFRLSGSKVVAYVHYPTISCDMLDVVESRQETFNNSSTIAQSNVLSWGKLTYYRLFACLYWLAGKAAHVGMVNGSWTQRHITSIWSRRDVSIVYPPCDVEAFLNIESVAESLLEDTKTVRLLSVGQIRPEKNHKLQLEVLHDVKEPLEKMGYNVELCIAGGCRNEEDQERVKMLKNEAEKLDISEQLIWQLNVPYEDLVVELSKALISIHTMHNEHFGISVVEAMAASTIILSNDSGGPRMDIVKDYEGHCVGYLSITKEEYVETILKIVEEGLKKRNDTRKYARKSLTRFGEAAFETHWNKEIEKVL.

Residues 1 to 15 (MSDTVISLISHSITT) are Lumenal-facing. The helical transmembrane segment at 16–36 (VFYLVPLIIALIIPFSLYSGF) threads the bilayer. Residues 37–131 (RRKSKTVAFF…HYKHCTMLFQ (95 aa)) lie on the Cytoplasmic side of the membrane. An intramembrane region (helical) is located at residues 132 to 152 (ALAGLILALEAWFRMVPAVFI). Topologically, residues 153 to 378 (DSMGYPLSLP…ISIHTMHNEH (226 aa)) are cytoplasmic. The helical intramembrane region spans 379-399 (FGISVVEAMAASTIILSNDSG). The Cytoplasmic segment spans residues 400 to 470 (GPRMDIVKDY…HWNKEIEKVL (71 aa)).

Belongs to the glycosyltransferase group 1 family. Glycosyltransferase 4 subfamily.

It is found in the endoplasmic reticulum membrane. The enzyme catalyses an alpha-D-Man-(1-&gt;3)-[alpha-D-Man-(1-&gt;6)]-beta-D-Man-(1-&gt;4)-beta-D-GlcNAc-(1-&gt;4)-alpha-D-GlcNAc-diphospho-di-trans,poly-cis-dolichol + 2 GDP-alpha-D-mannose = an alpha-D-Man-(1-&gt;2)-alpha-D-Man-(1-&gt;2)-alpha-D-Man-(1-&gt;3)-[alpha-D-Man-(1-&gt;6)]-beta-D-Man-(1-&gt;4)-beta-D-GlcNAc-(1-&gt;4)-alpha-D-GlcNAc-diphospho-di-trans,poly-cis-dolichol + 2 GDP + 2 H(+). The protein operates within protein modification; protein glycosylation. GDP-Man:Man(3)GlcNAc(2)-PP-Dol alpha-1,2-mannosyltransferase that operates in the biosynthetic pathway of dolichol-linked oligosaccharides, the glycan precursors employed in protein asparagine (N)-glycosylation. The assembly of dolichol-linked oligosaccharides begins on the cytosolic side of the endoplasmic reticulum membrane and finishes in its lumen. The sequential addition of sugars to dolichol pyrophosphate produces dolichol-linked oligosaccharides containing fourteen sugars, including two GlcNAcs, nine mannoses and three glucoses. Once assembled, the oligosaccharide is transferred from the lipid to nascent proteins by oligosaccharyltransferases. Catalyzes, on the cytoplasmic face of the endoplasmic reticulum, the addition of the fourth and fifth mannose residues to the dolichol-linked oligosaccharide chain, to produce Man(5)GlcNAc(2)-PP-dolichol core oligosaccharide. Man(5)GlcNAc(2)-PP-dolichol is a substrate for ALG3, the following enzyme in the biosynthetic pathway. The protein is GDP-Man:Man(3)GlcNAc(2)-PP-Dol alpha-1,2-mannosyltransferase of Caenorhabditis elegans.